Reading from the N-terminus, the 411-residue chain is Serine hydroxymethyltransferase (411 aa).

(6S)-5,6,7,8-tetrahydrofolate is bound by residues Leu113 and 117-119; that span reads GHL. At Lys222 the chain carries N6-(pyridoxal phosphate)lysine. Residues Glu238 and 346 to 348 contribute to the (6S)-5,6,7,8-tetrahydrofolate site; that span reads SPF.

It belongs to the SHMT family. In terms of assembly, homodimer. The cofactor is pyridoxal 5'-phosphate.

The protein resides in the cytoplasm. The catalysed reaction is (6R)-5,10-methylene-5,6,7,8-tetrahydrofolate + glycine + H2O = (6S)-5,6,7,8-tetrahydrofolate + L-serine. The protein operates within one-carbon metabolism; tetrahydrofolate interconversion. It participates in amino-acid biosynthesis; glycine biosynthesis; glycine from L-serine: step 1/1. Functionally, catalyzes the reversible interconversion of serine and glycine with tetrahydrofolate (THF) serving as the one-carbon carrier. This reaction serves as the major source of one-carbon groups required for the biosynthesis of purines, thymidylate, methionine, and other important biomolecules. Also exhibits THF-independent aldolase activity toward beta-hydroxyamino acids, producing glycine and aldehydes, via a retro-aldol mechanism. The sequence is that of Serine hydroxymethyltransferase from Prochlorococcus marinus (strain NATL1A).